Consider the following 96-residue polypeptide: Transcriptional regulator ATRY (96 aa).

Residues 1-12 (VICTACGQQVNQ) form a GATA-type; atypical zinc finger. One can recognise an ADD domain in the interval 1 to 96 (VICTACGQQV…IAVCDSVLEN (96 aa)). Residues 27–82 (LICKRWCAEGGNLICCDSCHNAFCKKCIWRNLGRKEISKIMNEKNEWHCYICCPEP) form a PHD-type; atypical zinc finger.

It belongs to the SNF2/RAD54 helicase family. In terms of tissue distribution, expressed in developing and adult testis. Also weakly expressed in prostate and epididymis.

It localises to the nucleus. It carries out the reaction ATP + H2O = ADP + phosphate + H(+). Functionally, could be a global transcriptional regulator. Modifies gene expression by affecting chromatin. The chain is Transcriptional regulator ATRY (ATRY) from Notamacropus eugenii (Tammar wallaby).